The primary structure comprises 2136 residues: Protein CELLULOSE SYNTHASE INTERACTIVE 3 (2136 aa).

ARM repeat units lie at residues 27-66 (MEMDDPEKAMATVAQLIEQLHAKTSSPQDKELTTARLLGI), 71-111 (REAR…VLCK), 113-152 (KDLRLKVLLGGCIPPLLSVLKSGTMETRKAAAEAIYEVSS), 159-201 (HIGM…NLCG), 204-243 (DGYWRLTLEGSGVDIVVSLLSSDNPNSQANAASLLARLVL), 246-286 (CDSI…ALSA), 289-337 (DEAK…NVFG), 376-417 (PESS…SLYG), 419-458 (SSLSCYLDDAEAKRVLIALITMASADVRERLIICLSGLCH), 461-500 (VGIWEAIGKREGIQLFISFLGLSSEQHQEYAVEMLKILTA), 503-542 (DDSKWAVTAAGGIPPLVQLLETGSQKAKEDAACILWNLCC), 545-584 (EEIRDCVERAGGIPAFLWLLKTGGPNSQETSAKTLVKLVH), 586-618 (ADPATINQLLALLLGDDPTSKIQVIEVLGHVLS), 619-663 (KASQ…DLFS), 666-705 (QDICGHLATDDIINPWIKLLTNNTQNVAKQVARALDALSR), 711-750 (NNKKKSYIAEGDIKSLIKLAKNSSIESAENAVSALANLLS), 752-791 (PDIAAEALAEDVVSAFTRILADGSPEGKRNASRALHQLLK), 811-848 (SLVDSLKSIDVDSADAFNILEVVALLAKTKSGVNFSYP), 849-887 (PWIALAEVPSSLETLVQCLAEGHTLVQDKAIEVLSRLCS), 936-980 (QLIT…GFLE), 1013-1041 (SVDAKSKVIVMEAGGLEVLVGKLARYTSS), 1042-1083 (AQAE…TLAV), 1109-1149 (RGIN…SLVK), 1163-1204 (EDVR…RIAD), 1207-1247 (DTNK…VLFS), 1249-1288 (HELRQNEMALSSLNQLIAVLRLGSRSARYSAAGALNELFD), 1290-1329 (ENIRNSEIACQAVQPLMDILGSVSESEQEVALSALIKLSS), 1333-1375 (SNTA…VVFS), 1377-1416 (KNIRTSASASGCMKPLITLMQSERSAAVEAAVFAIKILLD), 1418-1457 (EQHLELAAAHNIQELLVGLVSGKNYVIIEASLSALIKLGK), 1460-1499 (VPRKLDMVEAGIIERCLELLPGASSSLCSAVVELFRILTN), 1518-1546 (AVLLRSDLTLWGQHSALQALVNILEKQQT), 1547-1585 (LEAFSFTPSEAIVPLISFLESSSQAIQQLGAELLSHFLT), 1587-1626 (EDFQQDITTQSAVVPLVRLAGIGILSLQETAIKALEKISA), 1628-1669 (WPKA…NILQ), 1670-1704 (YDAECFFRVELPVLVKLLFSTIESTVLLALKALML), 1710-1750 (ASST…NNPR), 1790-1833 (SQHE…NFVM), 1836-1875 (RTNRRAVAEAGGVLLIQELLLSCNPEVSGQAALMVKFLFS), 1921-1960 (PKLRASEAATFCIPHLVGALKSGVEDVQGLVLDILYLLRH), 1969-2008 (VAKSQAMIAAEAIPVLQMLMKTCPPRFHDKADSLLHCLPG), and 2010-2035 (LTVNVMRANNLKQSMATTNAFCQLTI). The region spanning 1989 to 2106 (KTCPPRFHDK…VTEGEYSGSL (118 aa)) is the C2 domain.

In terms of assembly, associates with cellulase synthase (CESA) complexes. Binds to cortical microtubules. Interacts with CESA3 and CESA6. In terms of tissue distribution, expressed in dark-grown hypocotyls, leaves (confined to vasculature and trichomes), stamen, pollen, developing siliques, and roots. Restricted in meristematic tissue of the shoot and root. Present in distinct punctae at the cell cortex, called microtubule-associated cellulose synthase compartments, that move with constant velocities of 10 to 3000 nm/min.

The protein resides in the cell membrane. The protein localises to the cytoplasm. It is found in the cytoskeleton. It localises to the endomembrane system. In terms of biological role, regulator of the microtubular cytoskeleton. Microtubule-associated protein involved in the association of cellulase synthase (CESA) complexes (CSCs) and cortical microtubules. Promotes dynamics of CSCs in the plasma membrane in both microtubules-dependent and microtubules-independent manners. Regulates primary cell wall biosynthesis and cellulose microfibrils organization. The polypeptide is Protein CELLULOSE SYNTHASE INTERACTIVE 3 (Arabidopsis thaliana (Mouse-ear cress)).